Here is a 301-residue protein sequence, read N- to C-terminus: Retinochrome (301 aa).

The Extracellular portion of the chain corresponds to 1–17 (MFGNPAMTGLHQFTMWE). A helical transmembrane segment spans residues 18-43 (HYFTGSIYLVLGCVVFSLCGMCIIFL). Residues 44-54 (ARQSPKPRRKY) lie on the Cytoplasmic side of the membrane. Residues 55-76 (AILIHVLITAMAVNGGDPAHAS) form a helical membrane-spanning segment. Over 77 to 94 (SSIVGRWLYGSVGCQLMG) the chain is Extracellular. A helical transmembrane segment spans residues 95–120 (FWGFFGGMSHIWMLFAFAMERYMAVC). The Cytoplasmic portion of the chain corresponds to 121 to 132 (HREFYQQMPSVY). Residues 133-153 (YSIIVGLMYTFGTFWATMPLL) traverse the membrane as a helical segment. Topologically, residues 154–180 (GWASYGLEVHGTSCTINYSVSDESYQS) are extracellular. Asn-170 carries N-linked (GlcNAc...) asparagine glycosylation. Residues 181–208 (YVFFLAIFSFIFPMVSGWYAISKAWSGL) form a helical membrane-spanning segment. At 209 to 230 (SAIPDAEKEKDKDILSEEQLTA) the chain is on the cytoplasmic side. Residues 231–255 (LAGAFILISLISWSGFGYVAIYSAL) traverse the membrane as a helical segment. The Extracellular segment spans residues 256-264 (THGGAQLSH). Residues 265–289 (LRGHVPPIMSKTGCALFPLLIFLLT) traverse the membrane as a helical segment. An N6-(retinylidene)lysine modification is found at Lys-275. The Cytoplasmic portion of the chain corresponds to 290–301 (ARSLPKSDTKKP).

Belongs to the G-protein coupled receptor 1 family. Opsin subfamily. In terms of tissue distribution, mainly stored in myeloid bodies of the inner segments.

Its subcellular location is the membrane. Its function is as follows. Retinochrome is capable of acting as an effective catalyst in the light to convert various isomers of retinal into 11-cis, the form that is required by opsin to resynthesize rhodopsin. In Todarodes pacificus (Japanese flying squid), this protein is Retinochrome.